We begin with the raw amino-acid sequence, 387 residues long: uncharacterized protein (387 aa).

It localises to the virion. This is an uncharacterized protein from Acanthamoeba polyphaga (Amoeba).